Here is a 1729-residue protein sequence, read N- to C-terminus: MDQYWREQEGRGLFEDDANSYVSDDDTMSSLTRMIYDKNSSRDALHSDYDSSSFNVDSSSVAYPAWNQAGEEAPVTMEGVQEILLDLTNKLGFQKDNMRNIFDYVMVLLDSRASRMSPSSALLTIHADVIGGEHANFSKWYFASHFNDGHAIGFHDMSSPIVETMTLKEAEQAWRDQMAAFSPHRMMVQVCLYFLCWGEANNVRFVPECLCFIFECAYDYYISSEAKDVDAALPKEFYLDSVITPIYRFIHAQLFEILDGKYVRRERDHSQIIGYDDINQLFWSYKGLQEIMCADKTPLLDLPPFMRYRHLSDVEWKSCFYKSYYEYRSWFHNVTNFSRIWVMHISAYWYYSAYNSPNLYTKNYHIRLNNKPPASCRWTACGLAGAIASFITLAAVVFEYIHVPRRYHSARRLWPSMLLLISTLLLNIAPVVFIFASSTKEQHYASRLVVGIVHFFFSLVCVVYYSITPLRNLVGFTTKRSGKNLANRFFTANFTPTSKTGAFVSWCLWITVLVAKFLESYFFLTLNLADSIRFLGAMRPYDCRDYILGAGLCKAQPKILLSLLYLTDLSLFFLDTYLWYILISTIYSLAYAFCLGISVWTPWRELFYRVPRRIYTKLLYTDDMEIVFKPKVLISQVWNAIIISMYREHLISRTQIQELLYHQVPSEKAGYHTLRAPNFFYSQQVKHYKQDLFPANSEAARRISFFAQSLAESIPKTSSIDAMPTFTVLVPHYSEKILLSLREIIREEDQLSRVTLLEYLKQLYPVEWRNFVDDTKLLADENDSVIGSIDNEKNGVNKAYDLPFYCVGFKSATPEYTLRTRIWASLRTQTLYRTINGFSNYSRAIKLLYRTETPELVEWTNGDPVRLDEELDLMANRKFRFCVSMQRYAKFTKEEAENAEFLLRAYPDLQIAYMDEDPQSRHNDERHLYSVLIDGHCPIMENGKRRPKYRIRLSGNPILGDGKSDNQNMSIPYIRGEYVQMIDANQDNYLEECLKIRSILAEFEQLTPPLHSPYSVNAKAADNHPVAILGAREYIFSENTGMLGDVAAGKEQTFGTLFARILSLIGGKLHYGHPDFINVLFMITRGGVSKAQKGLHVNEDIYAGMIALQRGGRIKHCDYYQCGKGRDLGFGSILNFTTKIGTGMAEQMLSREYFNLGTQLPFDRFLSFFYAHAGFHVNNMVIMFSLQLLMLVIINLGAMYTVVPVCRYRQFDSLTASLYPEGCYQLKPVLEWLKRCILSIFIVFGIAFVPLAVCELGERGAIRMVIRLAKQIFSLSPIFEIFTCQIYAQSLIANLTFGGARYIGTSRGFATVRVPFSLLYSRFSGPSLYFGSRLMYMLLFGSITAWLPHYIYFWITLTALCISPFLYNPHQFAWTDFFVDYREFMRWLFRENSRNQANSWIGNCQLCRTRVTGYKRKIYGKKADKIAMDSPRARITTMFYGEILGPLGTLFFTCIPFLFINSQPGNDDETQSTNAFIRLIIMSVAPLVLSAIIAFFFFCLGIMLRPILGDRSKTYGVYLAGVAHFLFVCVDVVVFEVLGYLEGWSFSKTLLGFVAIISIHRFAHKFFIICFLSREFRHDGANLAWWSGRWNGQGFGYMVLTQPWREFVCKTTELNMFAGDFLLSHLLLFLQAPVILIPYIDKLHSIILFWLVPSRQIRPPIYTIRQNKLRRQIVLRYATLYFSLFIAFFVLLILPFVFGKSAAGTSMDKFNLIQPATKIVYSSTKNSSV.

Position 23 is a phosphoserine (Ser23). The next 6 helical transmembrane spans lie at 378–398 (WTAC…AVVF), 416–436 (SMLL…FIFA), 448–468 (LVVG…YSIT), 503–523 (FVSW…SYFF), 546–566 (YILG…LLYL), and 577–597 (YLWY…CLGI). Phosphoserine is present on residues Ser784 and Ser788. The next 8 membrane-spanning stretches (helical) occupy residues 1180–1200 (MVIM…GAMY), 1237–1257 (ILSI…CELG), 1337–1357 (MLLF…WITL), 1440–1460 (YGEI…FLFI), 1484–1504 (VAPL…GIML), 1515–1535 (YGVY…VVVF), 1550–1572 (LLGF…ICFL), and 1678–1698 (ATLY…PFVF).

The protein belongs to the glycosyltransferase 48 family. As to quaternary structure, component of the 1,3-beta-glucan synthase (GS) complex, composed of at least the alternate catalytic subunits bgs1, bgs2, bgs3, and bgs4, and a regulatory subunit chr4.

The protein localises to the cell membrane. Its subcellular location is the cell septum. The enzyme catalyses [(1-&gt;3)-beta-D-glucosyl](n) + UDP-alpha-D-glucose = [(1-&gt;3)-beta-D-glucosyl](n+1) + UDP + H(+). Its function is as follows. Alternate catalytic subunit of the 1,3-beta-glucan synthase (GS) complex. Synthesizes 1,3-beta-glucan, a major structural component of the fungal cell wall. Required for the assembly of the division septum and maintenance of cell polarity. In Schizosaccharomyces pombe (strain 972 / ATCC 24843) (Fission yeast), this protein is 1,3-beta-glucan synthase component bgs1 (bgs1).